Reading from the N-terminus, the 362-residue chain is sn-glycerol-3-phosphate import ATP-binding protein UgpC (362 aa).

The region spanning 4 to 235 is the ABC transporter domain; that stretch reads LSFRNVKKTY…PASTFVAGFI (232 aa). 37–44 is a binding site for ATP; the sequence is GPSGCGKS.

It belongs to the ABC transporter superfamily. sn-glycerol-3-phosphate importer (TC 3.A.1.1.3) family. As to quaternary structure, the complex is composed of two ATP-binding proteins (UgpC), two transmembrane proteins (UgpA and UgpE) and a solute-binding protein (UgpB).

It is found in the cell inner membrane. The catalysed reaction is sn-glycerol 3-phosphate(out) + ATP + H2O = sn-glycerol 3-phosphate(in) + ADP + phosphate + H(+). Functionally, part of the ABC transporter complex UgpBAEC involved in sn-glycerol-3-phosphate (G3P) import. Responsible for energy coupling to the transport system. The polypeptide is sn-glycerol-3-phosphate import ATP-binding protein UgpC (Bordetella pertussis (strain Tohama I / ATCC BAA-589 / NCTC 13251)).